Consider the following 393-residue polypeptide: Protein TsgA (393 aa).

The next 12 helical transmembrane spans lie at tryptophan 11 to methionine 31, phenylalanine 51 to proline 71, phenylalanine 78 to leucine 98, alanine 101 to isoleucine 121, leucine 134 to phenylalanine 154, tryptophan 162 to glycine 182, isoleucine 206 to isoleucine 226, threonine 245 to leucine 265, isoleucine 273 to proline 293, alanine 297 to leucine 317, phenylalanine 332 to valine 352, and leucine 361 to valine 381.

Belongs to the major facilitator superfamily. TsgA family.

It is found in the cell inner membrane. This is Protein TsgA from Escherichia coli O7:K1 (strain IAI39 / ExPEC).